Here is a 655-residue protein sequence, read N- to C-terminus: p-hydroxybenzoic acid efflux pump subunit AaeB (655 aa).

Helical transmembrane passes span 13–33 (FAVK…HFQL), 38–58 (WAVL…GGEP), 69–89 (LRII…IAMI), 93–113 (LLMI…SSLV), 121–141 (WGLA…EPLL), 152–172 (EIVI…PRSI), 370–390 (LFWL…IAVV), 407–427 (FIYG…VIIP), 431–451 (QSML…GIEV), 459–479 (MGAL…TFHF), and 482–502 (FLDS…VILL).

Belongs to the aromatic acid exporter ArAE (TC 2.A.85) family.

The protein resides in the cell inner membrane. Forms an efflux pump with AaeA. Could function as a metabolic relief valve, allowing to eliminate certain compounds when they accumulate to high levels in the cell. The protein is p-hydroxybenzoic acid efflux pump subunit AaeB of Shigella sonnei (strain Ss046).